Here is a 297-residue protein sequence, read N- to C-terminus: Acetyl-coenzyme A carboxylase carboxyl transferase subunit beta (297 aa).

Residues Met1–Pro23 form a disordered region. The CoA carboxyltransferase N-terminal domain maps to Val26–Glu295. Residues Cys30, Cys33, Cys49, and Cys52 each coordinate Zn(2+). A C4-type zinc finger spans residues Cys30–Cys52.

This sequence belongs to the AccD/PCCB family. Acetyl-CoA carboxylase is a heterohexamer composed of biotin carboxyl carrier protein (AccB), biotin carboxylase (AccC) and two subunits each of ACCase subunit alpha (AccA) and ACCase subunit beta (AccD). The cofactor is Zn(2+).

The protein localises to the cytoplasm. It carries out the reaction N(6)-carboxybiotinyl-L-lysyl-[protein] + acetyl-CoA = N(6)-biotinyl-L-lysyl-[protein] + malonyl-CoA. The protein operates within lipid metabolism; malonyl-CoA biosynthesis; malonyl-CoA from acetyl-CoA: step 1/1. In terms of biological role, component of the acetyl coenzyme A carboxylase (ACC) complex. Biotin carboxylase (BC) catalyzes the carboxylation of biotin on its carrier protein (BCCP) and then the CO(2) group is transferred by the transcarboxylase to acetyl-CoA to form malonyl-CoA. The chain is Acetyl-coenzyme A carboxylase carboxyl transferase subunit beta from Actinobacillus pleuropneumoniae serotype 7 (strain AP76).